Here is a 283-residue protein sequence, read N- to C-terminus: Bifunctional protein FolD (283 aa).

Residues 165–167, serine 190, and isoleucine 231 contribute to the NADP(+) site; that span reads GRS.

This sequence belongs to the tetrahydrofolate dehydrogenase/cyclohydrolase family. As to quaternary structure, homodimer.

It catalyses the reaction (6R)-5,10-methylene-5,6,7,8-tetrahydrofolate + NADP(+) = (6R)-5,10-methenyltetrahydrofolate + NADPH. The enzyme catalyses (6R)-5,10-methenyltetrahydrofolate + H2O = (6R)-10-formyltetrahydrofolate + H(+). It participates in one-carbon metabolism; tetrahydrofolate interconversion. In terms of biological role, catalyzes the oxidation of 5,10-methylenetetrahydrofolate to 5,10-methenyltetrahydrofolate and then the hydrolysis of 5,10-methenyltetrahydrofolate to 10-formyltetrahydrofolate. The polypeptide is Bifunctional protein FolD (Janthinobacterium sp. (strain Marseille) (Minibacterium massiliensis)).